We begin with the raw amino-acid sequence, 227 residues long: Protein M1425_1941 (227 aa).

Residues 15 to 209 form the AMMECR1 domain; that stretch reads EIGRFLIEIA…ETRPDGSDII (195 aa).

The sequence is that of Protein M1425_1941 from Saccharolobus islandicus (strain M.14.25 / Kamchatka #1) (Sulfolobus islandicus).